The primary structure comprises 472 residues: Cysteine--tRNA ligase (472 aa).

C27 is a Zn(2+) binding site. The 'HIGH' region signature appears at 29-39 (PTVYNLIHIGN). C214, H239, and E243 together coordinate Zn(2+). A 'KMSKS' region motif is present at residues 271-275 (KMSKS). Residue K274 participates in ATP binding.

Belongs to the class-I aminoacyl-tRNA synthetase family. Monomer. Zn(2+) serves as cofactor.

The protein localises to the cytoplasm. The catalysed reaction is tRNA(Cys) + L-cysteine + ATP = L-cysteinyl-tRNA(Cys) + AMP + diphosphate. This chain is Cysteine--tRNA ligase, found in Lachnospira eligens (strain ATCC 27750 / DSM 3376 / VPI C15-48 / C15-B4) (Eubacterium eligens).